The chain runs to 311 residues: MYQLAQSNLWTGRLDSETDPTQFRHFQTVKFGDLSQLDFSDEHKGVGLLGYAIDKGVELNKGRVGAKEGPNAIKRAFAGLPDLNQCEEIIDYGNVEHNHELLIDTQREFADLAAKSIKRHKQTFLLGGGHDIAYAQYLATRKVYPESSIGVINIDAHFDTRDEGYSTSGTSFRQILEEDDNADYLVLGISQGGNTQALFNYAKEKDIQFVYADELLHQVSPPIKDMIERFIHNHDTVMFTICMDVVDSAFAPGVSAPAVLGIYPHTVFELAKRVIPSEKVKSISIAEMNPTYDSDQRTAKLVANLVHHCLI.

The Mn(2+) site is built by His130, Asp155, His157, Asp159, Cys242, and Asp244.

The protein belongs to the arginase family. It depends on Mn(2+) as a cofactor.

It catalyses the reaction N-formimidoyl-L-glutamate + H2O = formamide + L-glutamate. It functions in the pathway amino-acid degradation; L-histidine degradation into L-glutamate; L-glutamate from N-formimidoyl-L-glutamate (hydrolase route): step 1/1. In terms of biological role, catalyzes the conversion of N-formimidoyl-L-glutamate to L-glutamate and formamide. The protein is Formimidoylglutamase of Staphylococcus epidermidis (strain ATCC 35984 / DSM 28319 / BCRC 17069 / CCUG 31568 / BM 3577 / RP62A).